Here is a 339-residue protein sequence, read N- to C-terminus: Anthranilate phosphoribosyltransferase (339 aa).

5-phospho-alpha-D-ribose 1-diphosphate-binding positions include G79, 82-83 (GD), S87, 89-92 (NIST), 107-115 (KHGNRSISS), and S119. Anthranilate is bound at residue G79. S91 lines the Mg(2+) pocket. N110 contacts anthranilate. R165 lines the anthranilate pocket. Residues D224 and E225 each coordinate Mg(2+).

The protein belongs to the anthranilate phosphoribosyltransferase family. In terms of assembly, homodimer. It depends on Mg(2+) as a cofactor.

It catalyses the reaction N-(5-phospho-beta-D-ribosyl)anthranilate + diphosphate = 5-phospho-alpha-D-ribose 1-diphosphate + anthranilate. The protein operates within amino-acid biosynthesis; L-tryptophan biosynthesis; L-tryptophan from chorismate: step 2/5. Catalyzes the transfer of the phosphoribosyl group of 5-phosphorylribose-1-pyrophosphate (PRPP) to anthranilate to yield N-(5'-phosphoribosyl)-anthranilate (PRA). The sequence is that of Anthranilate phosphoribosyltransferase from Listeria monocytogenes serotype 4b (strain CLIP80459).